A 388-amino-acid chain; its full sequence is S-adenosylmethionine synthase (388 aa).

His-16 is a binding site for ATP. Asp-18 contributes to the Mg(2+) binding site. Residue Glu-44 coordinates K(+). Residues Glu-57 and Gln-100 each coordinate L-methionine. The flexible loop stretch occupies residues 100–110; sequence QSPEIAQGVDR. ATP contacts are provided by residues 165-167, Asp-240, 246-247, Ala-263, and Lys-267; these read DAK and RK. Asp-240 serves as a coordination point for L-methionine. Lys-271 provides a ligand contact to L-methionine.

It belongs to the AdoMet synthase family. As to quaternary structure, homotetramer; dimer of dimers. The cofactor is Mg(2+). Requires K(+) as cofactor.

The protein localises to the cytoplasm. The catalysed reaction is L-methionine + ATP + H2O = S-adenosyl-L-methionine + phosphate + diphosphate. It functions in the pathway amino-acid biosynthesis; S-adenosyl-L-methionine biosynthesis; S-adenosyl-L-methionine from L-methionine: step 1/1. Its function is as follows. Catalyzes the formation of S-adenosylmethionine (AdoMet) from methionine and ATP. The overall synthetic reaction is composed of two sequential steps, AdoMet formation and the subsequent tripolyphosphate hydrolysis which occurs prior to release of AdoMet from the enzyme. This is S-adenosylmethionine synthase from Acinetobacter baumannii (strain ACICU).